The primary structure comprises 94 residues: Small ubiquitin-related modifier 3-like (94 aa).

Residue K11 forms a Glycyl lysine isopeptide (Lys-Gly) (interchain with G-Cter in SUMO) linkage. Positions D15–G92 constitute a Ubiquitin-like domain. G92 is covalently cross-linked (Glycyl lysine isopeptide (Gly-Lys) (interchain with K-? in acceptor proteins)). Residues S93 to C94 constitute a propeptide that is removed on maturation.

Belongs to the ubiquitin family. SUMO subfamily. As to quaternary structure, interacts with sae2 and ube2i. Covalently attached to a number of proteins. Polymeric chains can be formed through Lys-11 cross-linking. In terms of processing, cleavage of precursor form by a sentrin-specific protease is necessary for function.

The protein resides in the cytoplasm. Its subcellular location is the nucleus. It is found in the PML body. Functionally, ubiquitin-like protein which can be covalently attached to target lysines either as a monomer or as a lysine-linked polymer. Does not seem to be involved in protein degradation and may function as an antagonist of ubiquitin in the degradation process. Plays a role in a number of cellular processes such as nuclear transport, DNA replication and repair, mitosis and signal transduction. Covalent attachment to its substrates requires prior activation by the E1 complex sae1-sae2 and linkage to the E2 enzyme ube2i. This Danio rerio (Zebrafish) protein is Small ubiquitin-related modifier 3-like (sumo3l).